A 274-amino-acid polypeptide reads, in one-letter code: Phosphatidylglycerol--prolipoprotein diacylglyceryl transferase (274 aa).

A run of 4 helical transmembrane segments spans residues 16–36 (VGLH…LSSF), 62–82 (FALG…VLFY), 94–114 (IIKI…LVIW), and 129–149 (LSVT…ALLI). Arginine 150 is a binding site for a 1,2-diacyl-sn-glycero-3-phospho-(1'-sn-glycerol). The next 3 helical transmembrane spans lie at 184-204 (VQLY…WLCY), 213-233 (GYSA…AEFF), and 247-267 (LTIG…ILWI).

Belongs to the Lgt family.

It localises to the cell inner membrane. The catalysed reaction is L-cysteinyl-[prolipoprotein] + a 1,2-diacyl-sn-glycero-3-phospho-(1'-sn-glycerol) = an S-1,2-diacyl-sn-glyceryl-L-cysteinyl-[prolipoprotein] + sn-glycerol 1-phosphate + H(+). The protein operates within protein modification; lipoprotein biosynthesis (diacylglyceryl transfer). In terms of biological role, catalyzes the transfer of the diacylglyceryl group from phosphatidylglycerol to the sulfhydryl group of the N-terminal cysteine of a prolipoprotein, the first step in the formation of mature lipoproteins. This Chlamydia muridarum (strain MoPn / Nigg) protein is Phosphatidylglycerol--prolipoprotein diacylglyceryl transferase.